The following is an 808-amino-acid chain: Protein translocase subunit SecA (808 aa).

Residues Gln87, 105 to 109 (GEGKT), and Asp493 contribute to the ATP site.

This sequence belongs to the SecA family. Monomer and homodimer. Part of the essential Sec protein translocation apparatus which comprises SecA, SecYEG and auxiliary proteins SecDF. Other proteins may also be involved.

The protein resides in the cell membrane. The protein localises to the cytoplasm. The catalysed reaction is ATP + H2O + cellular proteinSide 1 = ADP + phosphate + cellular proteinSide 2.. Its function is as follows. Part of the Sec protein translocase complex. Interacts with the SecYEG preprotein conducting channel. Has a central role in coupling the hydrolysis of ATP to the transfer of proteins into and across the cell membrane, serving as an ATP-driven molecular motor driving the stepwise translocation of polypeptide chains across the membrane. This Mycoplasma pneumoniae (strain ATCC 29342 / M129 / Subtype 1) (Mycoplasmoides pneumoniae) protein is Protein translocase subunit SecA.